The sequence spans 197 residues: Protein GrpE (197 aa).

Residues 1-27 are compositionally biased toward basic and acidic residues; the sequence is MTKQEKAENQEKPTEETVEETPKKETP. Positions 1–50 are disordered; sequence MTKQEKAENQEKPTEETVEETPKKETPFEPVMEADEVEETTEAQAPVEEA. A compositionally biased stretch (acidic residues) spans 32-41; the sequence is MEADEVEETT.

Belongs to the GrpE family. Homodimer.

It is found in the cytoplasm. In terms of biological role, participates actively in the response to hyperosmotic and heat shock by preventing the aggregation of stress-denatured proteins, in association with DnaK and GrpE. It is the nucleotide exchange factor for DnaK and may function as a thermosensor. Unfolded proteins bind initially to DnaJ; upon interaction with the DnaJ-bound protein, DnaK hydrolyzes its bound ATP, resulting in the formation of a stable complex. GrpE releases ADP from DnaK; ATP binding to DnaK triggers the release of the substrate protein, thus completing the reaction cycle. Several rounds of ATP-dependent interactions between DnaJ, DnaK and GrpE are required for fully efficient folding. The polypeptide is Protein GrpE (Latilactobacillus sakei (Lactobacillus sakei)).